We begin with the raw amino-acid sequence, 539 residues long: Polyol transporter 5 (539 aa).

Positions 1-11 are enriched in polar residues; sequence MTGATPENRTA. The disordered stretch occupies residues 1–24; sequence MTGATPENRTAPSPPPVKHVPESV. Helical transmembrane passes span 37-57, 73-93, 104-124, 127-147, 165-185, 196-216, 296-316, 333-353, 364-384, 391-411, 433-453, and 463-483; these read FACA…IGVM, LQIG…SCAA, YTIV…GLSP, AFLM…LMIA, SFPE…NLAF, LMLG…LAMP, IAAI…VVLF, LLAT…ATFL, LTSV…LTII, VMWA…TFSI, GSSM…ISFL, and GAFY…YTFL. 2 stretches are compositionally biased toward basic and acidic residues: residues 503–514 and 530–539; these read WRDSKSKPKGNP and QWKEGDTQSS. The tract at residues 503-539 is disordered; that stretch reads WRDSKSKPKGNPEKTVPNPEVEIGSNKQWKEGDTQSS.

It belongs to the major facilitator superfamily. Sugar transporter (TC 2.A.1.1) family. As to expression, highly expressed in roots. Expressed in vascular tissue of leaves, sepals and siliques.

It localises to the cell membrane. Its function is as follows. Plasma membrane broad-spectrum sugar-proton symporter. Mediates the uptake of linear polyols such as sorbitol, xylitol, erythritol or glycerol. Can transport the cyclic polyol myo-inositol and different hexoses, pentoses (including ribose), tetroses and sugar alcohols. The protein is Polyol transporter 5 (PLT5) of Arabidopsis thaliana (Mouse-ear cress).